The chain runs to 297 residues: Small ribosomal subunit biogenesis GTPase RsgA (297 aa).

In terms of domain architecture, CP-type G spans 65–223 (INEIGRPAVA…IADTPGFSAI (159 aa)). Residues 114-117 (SKSD) and 166-174 (GQSGAGKST) each bind GTP. Residues C247, C252, H254, and C260 each contribute to the Zn(2+) site.

It belongs to the TRAFAC class YlqF/YawG GTPase family. RsgA subfamily. As to quaternary structure, monomer. Associates with 30S ribosomal subunit, binds 16S rRNA. The cofactor is Zn(2+).

Its subcellular location is the cytoplasm. One of several proteins that assist in the late maturation steps of the functional core of the 30S ribosomal subunit. Helps release RbfA from mature subunits. May play a role in the assembly of ribosomal proteins into the subunit. Circularly permuted GTPase that catalyzes slow GTP hydrolysis, GTPase activity is stimulated by the 30S ribosomal subunit. In Lactobacillus johnsonii (strain CNCM I-12250 / La1 / NCC 533), this protein is Small ribosomal subunit biogenesis GTPase RsgA.